Consider the following 1589-residue polypeptide: Polyhomeotic-proximal chromatin protein (1589 aa).

The span at Met-1–Thr-15 shows a compositional bias: basic and acidic residues. 5 disordered regions span residues Met-1–Gln-85, Lys-107–Ser-174, Leu-252–Ile-290, Leu-1112–Thr-1244, and Ala-1260–Lys-1294. Composition is skewed to low complexity over residues Asp-18–Ser-28, Asn-60–Gln-80, and Ala-119–Thr-139. Polar residues predominate over residues His-154–Ser-174. Gly residues predominate over residues Asn-260–Gly-271. Over residues Ala-272–Gln-285 the composition is skewed to low complexity. The residue at position 1145 (Ser-1145) is a Phosphoserine. Thr-1148 is modified (phosphothreonine). Over residues Thr-1157–Ala-1180 the composition is skewed to low complexity. The span at Arg-1189–Ser-1221 shows a compositional bias: polar residues. Composition is skewed to low complexity over residues Thr-1230–Thr-1244 and Ala-1260–Ser-1290. The segment at Ser-1356 to Arg-1389 adopts an FCS-type zinc-finger fold. Zn(2+) contacts are provided by Cys-1365, Cys-1368, Cys-1383, and Cys-1387. One can recognise an SAM domain in the interval Trp-1513–Val-1577.

Component of PRC1 complex, which contains many PcG proteins like Pc, ph, Scm, Psc, Sce and also chromatin-remodeling proteins such as histone deacetylases. This complex is distinct from the Esc/E(z) complex, at least composed of esc, E(z), Su(z)12, HDAC1/Rpd3 and Caf1-55. The 2 complexes however cooperate and interact together during the first 3 hours of development to establish PcG silencing. Interacts with the SAM domain of Scm via its SAM domain in vitro. Interacts with Trl in vivo and with corto in vitro. Salivary glands.

It localises to the nucleus. Functionally, polycomb group (PcG) protein. PcG proteins act by forming multiprotein complexes, which are required to maintain the transcriptionally repressive state of homeotic genes throughout development. PcG proteins are not required to initiate repression, but to maintain it during later stages of development. Component of the PcG multiprotein PRC1 complex, a complex that acts via chromatin remodeling and modification of histones; it mediates monoubiquitination of histone H2A 'Lys-118', rendering chromatin heritably changed in its expressibility. Plays a role in regulating the expression of other pair-rule genes such as eve, ftz, and H. This is Polyhomeotic-proximal chromatin protein (ph-p) from Drosophila melanogaster (Fruit fly).